Consider the following 384-residue polypeptide: Guanine nucleotide-binding protein alpha-1 subunit (384 aa).

The tract at residues 1-22 is disordered; that stretch reads MGSLCSRNKHYSQADDEENTQT. Gly2 is lipidated: N-myristoyl glycine. Cys5 carries S-palmitoyl cysteine lipidation. Residues 38–384 form the G-alpha domain; it reads HIQKLLLLGA…RRNLFEAGLL (347 aa). The segment at 41–54 is G1 motif; that stretch reads KLLLLGAGDSGKST. The GTP site is built by Asp49, Ser50, Gly51, Lys52, Ser53, Thr54, Asp163, Leu188, Thr194, Gly222, Asn288, Lys289, Asp291, and Ala356. Ser53 provides a ligand contact to Mg(2+). The interval 186-194 is G2 motif; it reads DVLFARIRT. Residue Thr194 coordinates Mg(2+). Residues 215–224 form a G3 motif region; that stretch reads YRLFDVGGQR. A G4 motif region spans residues 284–291; the sequence is MLFLNKFD. Positions 354-359 are G5 motif; that stretch reads TTALDQ.

Belongs to the G-alpha family. As to quaternary structure, g proteins are composed of 3 units; alpha, beta and gamma. The alpha chain contains the guanine nucleotide binding site. Requires Mg(2+) as cofactor.

Its function is as follows. Guanine nucleotide-binding proteins (G proteins) are involved as modulators or transducers in various transmembrane signaling systems. The polypeptide is Guanine nucleotide-binding protein alpha-1 subunit (GPA1) (Solanum lycopersicum (Tomato)).